The following is a 301-amino-acid chain: Quinolinate synthase (301 aa).

Histidine 21 and serine 38 together coordinate iminosuccinate. A [4Fe-4S] cluster-binding site is contributed by cysteine 83. Iminosuccinate contacts are provided by residues 109 to 111 (YIN) and serine 126. Residue cysteine 169 coordinates [4Fe-4S] cluster. Residues 195-197 (HPE) and threonine 212 each bind iminosuccinate. Residue cysteine 257 participates in [4Fe-4S] cluster binding.

This sequence belongs to the quinolinate synthase family. Type 2 subfamily. Requires [4Fe-4S] cluster as cofactor.

Its subcellular location is the cytoplasm. It catalyses the reaction iminosuccinate + dihydroxyacetone phosphate = quinolinate + phosphate + 2 H2O + H(+). Its pathway is cofactor biosynthesis; NAD(+) biosynthesis; quinolinate from iminoaspartate: step 1/1. Catalyzes the condensation of iminoaspartate with dihydroxyacetone phosphate to form quinolinate. This chain is Quinolinate synthase, found in Clostridium perfringens (strain SM101 / Type A).